A 490-amino-acid chain; its full sequence is Betaine aldehyde dehydrogenase (490 aa).

Ser-26, Ile-27, and Asp-93 together coordinate K(+). 150–152 (GAW) provides a ligand contact to NAD(+). Lys-162 functions as the Charge relay system in the catalytic mechanism. 176–179 (KPSE) contributes to the NAD(+) binding site. Val-180 lines the K(+) pocket. 230 to 233 (GVAT) provides a ligand contact to NAD(+). K(+) is bound at residue Leu-246. The Proton acceptor role is filled by Glu-252. NAD(+) is bound by residues Gly-254, Cys-286, and Glu-387. The Nucleophile role is filled by Cys-286. At Cys-286 the chain carries Cysteine sulfenic acid (-SOH). The K(+) site is built by Lys-457 and Gly-460. The active-site Charge relay system is Glu-464.

The protein belongs to the aldehyde dehydrogenase family. In terms of assembly, dimer of dimers. Requires K(+) as cofactor.

It carries out the reaction betaine aldehyde + NAD(+) + H2O = glycine betaine + NADH + 2 H(+). It functions in the pathway amine and polyamine biosynthesis; betaine biosynthesis via choline pathway; betaine from betaine aldehyde: step 1/1. Involved in the biosynthesis of the osmoprotectant glycine betaine. Catalyzes the irreversible oxidation of betaine aldehyde to the corresponding acid. This chain is Betaine aldehyde dehydrogenase, found in Stutzerimonas stutzeri (strain A1501) (Pseudomonas stutzeri).